Reading from the N-terminus, the 1450-residue chain is Phospholipase B1, membrane-associated (1450 aa).

An N-terminal signal peptide occupies residues 1–27 (MESWPGVSLVGLLLLLLLGQGPSQIHG). The Extracellular segment spans residues 28-1422 (SSGENTSQPQ…KAKENSNTLY (1395 aa)). N-linked (GlcNAc...) asparagine glycans are attached at residues N32, N45, and N179. A run of 3 repeats spans residues 41 to 351 (RTLK…YRNS), 366 to 711 (MKEG…TKNS), and 712 to 1058 (NLGH…FRNS). The interval 41–1407 (RTLKNFSFPC…NPFLYTVRNS (1367 aa)) is 4 X 308-326 AA approximate repeats. Catalysis depends on residues S404, D518, and H659. N699 carries N-linked (GlcNAc...) asparagine glycosylation. Positions 708–720 (TKNSNLGHGTSMS) are enriched in polar residues. The segment at 708–734 (TKNSNLGHGTSMSCEEKAPSASPPTSV) is disordered. 10 N-linked (GlcNAc...) asparagine glycosylation sites follow: N787, N801, N844, N880, N926, N1059, N1226, N1280, N1383, and N1387. Repeat 4 spans residues 1068–1407 (IENWGSDFLC…NPFLYTVRNS (340 aa)). Residues 1408–1450 (QILLDKAKENSNTLYWAVPVAAVGGLVVGILGMMLWRTVRLVQ) form a necessary for membrane localization region. Residues 1423–1443 (WAVPVAAVGGLVVGILGMMLW) traverse the membrane as a helical segment. The Cytoplasmic portion of the chain corresponds to 1444-1450 (RTVRLVQ).

This sequence belongs to the 'GDSL' lipolytic enzyme family. Phospholipase B1 subfamily. Undergoes proteolytic cleavage in the ileum. In terms of tissue distribution, expressed in the ileum mucosa, Paneth cells spermatocytes, spermatids and sperm (at protein level). Expressed in the ileum, jejunum, esophagus and testis.

It localises to the apical cell membrane. It carries out the reaction a 1,2-diacyl-sn-glycero-3-phosphocholine + H2O = a 1-acyl-sn-glycero-3-phosphocholine + a fatty acid + H(+). It catalyses the reaction a 1-O-alkyl-2-acyl-sn-glycero-3-phosphocholine + H2O = a 1-O-alkyl-sn-glycero-3-phosphocholine + a fatty acid + H(+). The catalysed reaction is a 1-acyl-sn-glycero-3-phosphocholine + H2O = sn-glycerol 3-phosphocholine + a fatty acid + H(+). The enzyme catalyses a triacylglycerol + H2O = a diacylglycerol + a fatty acid + H(+). It carries out the reaction 1,2-dihexadecanoyl-sn-glycero-3-phosphocholine + H2O = 1-hexadecanoyl-sn-glycero-3-phosphocholine + hexadecanoate + H(+). It catalyses the reaction 1-hexadecanoyl-2-(9Z-octadecenoyl)-sn-glycero-3-phosphocholine + H2O = 1-hexadecanoyl-sn-glycero-3-phosphocholine + (9Z)-octadecenoate + H(+). The catalysed reaction is 1,2-di-(9Z-octadecenoyl)-sn-glycero-3-phosphocholine + H2O = 1-(9Z-octadecenoyl)-sn-glycero-3-phosphocholine + (9Z)-octadecenoate + H(+). The enzyme catalyses 1-hexadecanoyl-2-(9Z,12Z-octadecadienoyl)-sn-glycero-3-phosphocholine + H2O = (9Z,12Z)-octadecadienoate + 1-hexadecanoyl-sn-glycero-3-phosphocholine + H(+). It carries out the reaction 1-hexadecanoyl-2-(9Z,12Z-octadecadienoyl)-sn-glycero-3-phosphocholine + H2O = 2-(9Z,12Z-octadecadienoyl)-sn-glycero-3-phosphocholine + hexadecanoate + H(+). It catalyses the reaction 1-hexadecanoyl-2-(9Z-octadecenoyl)-sn-glycero-3-phosphoethanolamine + H2O = 1-hexadecanoyl-sn-glycero-3-phosphoethanolamine + (9Z)-octadecenoate + H(+). The catalysed reaction is 1-hexadecanoyl-2-(9Z-octadecenoyl)-sn-glycero-3-phospho-(1'-sn-glycerol) + H2O = 1-hexadecanoyl-sn-glycero-3-phospho-(1'-sn-glycerol) + (9Z)-octadecenoate + H(+). The enzyme catalyses 1,2-dihexadecanoyl-sn-glycero-3-phosphocholine + 2 H2O = sn-glycerol 3-phosphocholine + 2 hexadecanoate + 2 H(+). It carries out the reaction 1-O-hexadecyl-2-(9Z)-octadecenoyl-sn-glycero-3-phosphocholine + H2O = 1-O-hexadecyl-sn-glycero-3-phosphocholine + (9Z)-octadecenoate + H(+). It catalyses the reaction 1-hexadecanoyl-sn-glycero-3-phosphocholine + H2O = sn-glycerol 3-phosphocholine + hexadecanoate + H(+). The catalysed reaction is 1,2,3-tri-(9Z-octadecenoyl)-glycerol + H2O = di-(9Z)-octadecenoylglycerol + (9Z)-octadecenoate + H(+). The enzyme catalyses 1-hexadecanoyl-2-(9Z)-octadecenoyl-3-octadecanoyl-sn-glycerol + H2O = 1-hexadecanoyl-2-(9Z-octadecenoyl)-sn-glycerol + octadecanoate + H(+). It carries out the reaction 1,3-dihexadecanoyl-2-(9Z-octadecenoyl)glycerol + H2O = 1,3-dihexadecanoylglycerol + (9Z)-octadecenoate + H(+). It catalyses the reaction 1,3-dihexadecanoyl-2-(9Z-octadecenoyl)glycerol + H2O = 1-hexadecanoyl-2-(9Z-octadecenoyl)-glycerol + hexadecanoate + H(+). The catalysed reaction is 1-hexadecanoyl-2-(9Z)-octadecenoyl-3-octadecanoyl-sn-glycerol + H2O = 1-hexadecanoyl-3-octadecanoyl-sn-glycerol + (9Z)-octadecenoate + H(+). The enzyme catalyses 1-hexadecanoyl-2-(9Z)-octadecenoyl-3-octadecanoyl-sn-glycerol + H2O = 2-(9Z-octadecenoyl)-3-octadecanoyl-sn-glycerol + hexadecanoate + H(+). It carries out the reaction 1-octadecanoyl-2-(9Z,12Z)-octadecadienoyl-sn-glycerol + H2O = 1-octadecanoyl-sn-glycerol + (9Z,12Z)-octadecadienoate + H(+). It catalyses the reaction 1,2-di-(9Z-octadecenoyl)-sn-glycerol + H2O = 1-(9Z-octadecenoyl)-sn-glycerol + (9Z)-octadecenoate + H(+). The catalysed reaction is 2,3-di-(9Z)-octadecenoyl-sn-glycerol + H2O = 3-(9Z-octadecenoyl)-sn-glycerol + (9Z)-octadecenoate + H(+). The enzyme catalyses 1,3-di-(9Z-octadecenoyl)-glycerol + H2O = 1-(9Z-octadecenoyl)-glycerol + (9Z)-octadecenoate + H(+). It carries out the reaction 1-(9Z-octadecenoyl)-glycerol + H2O = glycerol + (9Z)-octadecenoate + H(+). It catalyses the reaction 2-(9Z-octadecenoyl)-glycerol + H2O = glycerol + (9Z)-octadecenoate + H(+). With respect to regulation, up-regulated by bile acids such as deoxycholate. Inhibited by diisopropyl fluorophosphate. Its function is as follows. Calcium-independent membrane-associated phospholipase that catalyzes complete diacylation of phospholipids by hydrolyzing both sn-1 and sn-2 fatty acyl chains attached to the glycerol backbone (phospholipase B activity). Has dual phospholipase and lysophospholipase activities toward diacylphospholipids. Preferentially cleaves sn-2 ester bonds over sn-1 bonds. Acts as a lipase toward glycerolipid substrates. Hydrolyzes fatty acyl chains of diacylglycerols with preference for the sn-2 position and of triacylglycerols with not positional selectivity. May also hydrolyze long chain retinyl esters such as retinyl palmitate. May contribute to digestion of dietary phospholipids, glycerolipids and retinoids, facilitating lipid absorption at the brush border. The protein is Phospholipase B1, membrane-associated (Plb1) of Rattus norvegicus (Rat).